The primary structure comprises 490 residues: Tektin-3 (490 aa).

Thr7, Thr9, and Thr11 each carry an O-linked (GalNAc...) threonine glycan. Asn41, Asn86, Asn111, and Asn276 each carry an N-linked (GlcNAc...) asparagine glycan. Residues 415 to 461 (MAQLRLVNEVYEVDETIQTLQQRLRDSEDTLQSLAHTKATLEHDLAV) are a coiled coil.

This sequence belongs to the tektin family. In terms of assembly, microtubule inner protein component of sperm flagellar doublet microtubules. Interacts with TEKT1, TEKT2, TEKT4 and TEKT5. Interacts with CCDC38. In terms of processing, N- and O-glycosylated. Post-translationally, ubiquitinated, leading to its degradation. Deubiquitinated by USP16, promoting its stability. May be proteolytically processed during the epididymal transit of spermatozoa. Expressed preferentially in testis. Expressed predominantly in late pachytene spermatocytes and early round spermatids. Expressed in spermatozoa.

Its subcellular location is the cytoplasm. The protein resides in the cytoskeleton. It is found in the cilium axoneme. The protein localises to the flagellum axoneme. It localises to the cytoplasmic vesicle. Its subcellular location is the secretory vesicle. The protein resides in the acrosome outer membrane. Functionally, microtubule inner protein (MIP) part of the dynein-decorated doublet microtubules (DMTs) in cilia and flagellar axoneme. Forms filamentous polymers in the walls of ciliary and flagellar microtubules. Required for normal sperm mobility. The chain is Tektin-3 (Tekt3) from Mus musculus (Mouse).